The sequence spans 574 residues: MFSSIMFKKKPKQNLNENEITSQSTTTTSTLSDSKPSEKKIKDNKNDKFKINENDTIVEIEWESDIQQKYDLIALYDNDTNVIDDYIWHWKINDEYTYNNNNTNIIRDPNKNYYIKYWRIDDNNNGINHHHHYNHHHHINNHHHNHIKTNHHSLPPNLHLSPLHNNNHHRHHSHQFPKVSINNVYKQIHNYKLKNHFIRQQFQNNSTTNQDTIKIKLSHFEERNLLKSVDYSGEMFKQYSNWMTNNWERIKDKMVRDLVLPGSHDAATYGIKSSSLRVPGDKVPSFIPNSIVSKWSKTQSGNIFKQLTMGYRYFDLRVAPYPVTGKLYIYHAMFSVPVSEVLDDIVKFIKNTNYYQQPNSSNNNDEKQQLQQQQQLFKKEIILLHWNHLGYLSIEQHQELQLMIKSKLDGMLANRQLGNNVKVRELEFTPIINIYDDNGLKKRIINDDGKKSKQPFDSIQNEPLFWYSNKSLVSNYDSNQFHTSKDVISFLSREVTYNHKDRFWVAQCILTIDSKKLLHITTNSLLDWNHSEFPKFLKFFENLEEKKVPTNIIMTDFCTHYPITDYAIRRNINE.

The disordered stretch occupies residues 1–42; the sequence is MFSSIMFKKKPKQNLNENEITSQSTTTTSTLSDSKPSEKKIK. Positions 21-34 are enriched in low complexity; the sequence is TSQSTTTTSTLSDS. The region spanning 270-449 is the PI-PLC X-box domain; it reads GIKSSSLRVP…LKKRIINDDG (180 aa).

This is PI-PLC X domain-containing protein DDB_G0269228 from Dictyostelium discoideum (Social amoeba).